The sequence spans 447 residues: UPF0210 protein lp_2507 (447 aa).

It belongs to the UPF0210 family. Homodimer.

In Lactiplantibacillus plantarum (strain ATCC BAA-793 / NCIMB 8826 / WCFS1) (Lactobacillus plantarum), this protein is UPF0210 protein lp_2507.